Here is a 97-residue protein sequence, read N- to C-terminus: Single insulin-like growth factor-binding domain protein-1 (97 aa).

A signal peptide spans 1–19 (MKTLFVFAVGIMLSMRASA). The IGFBP N-terminal domain occupies 20–96 (FTCPECRPEL…PEIVGTCVKI (77 aa)). The O-linked (GalNAc...) threonine glycan is linked to threonine 21. Cystine bridges form between cysteine 22–cysteine 45, cysteine 25–cysteine 47, cysteine 30–cysteine 48, cysteine 36–cysteine 51, cysteine 59–cysteine 75, and cysteine 69–cysteine 93.

In terms of tissue distribution, expressed in hemocytes.

Its subcellular location is the secreted. Has a role in the innate immune system. The protein is Single insulin-like growth factor-binding domain protein-1 of Cupiennius salei (American wandering spider).